The primary structure comprises 228 residues: Large ribosomal subunit protein uL23m (228 aa).

Residues 194 to 228 (PEEEGWSEVEENLPLDESAESAAEESSSKGSETRQ) form a disordered region. Acidic residues predominate over residues 195 to 216 (EEEGWSEVEENLPLDESAESAA).

Belongs to the universal ribosomal protein uL23 family. Component of the mitochondrial large ribosomal subunit (mt-LSU). Mature N.crassa 74S mitochondrial ribosomes consist of a small (37S) and a large (54S) subunit. The 37S small subunit contains a 16S ribosomal RNA (16S mt-rRNA) and 32 different proteins. The 54S large subunit contains a 23S rRNA (23S mt-rRNA) and 42 different proteins. uL23m forms the wall of the exit tunnel.

The protein resides in the mitochondrion. Functionally, component of the mitochondrial ribosome (mitoribosome), a dedicated translation machinery responsible for the synthesis of mitochondrial genome-encoded proteins, including at least some of the essential transmembrane subunits of the mitochondrial respiratory chain. The mitoribosomes are attached to the mitochondrial inner membrane and translation products are cotranslationally integrated into the membrane. The chain is Large ribosomal subunit protein uL23m (mrp20) from Neurospora crassa (strain ATCC 24698 / 74-OR23-1A / CBS 708.71 / DSM 1257 / FGSC 987).